The sequence spans 205 residues: Glycerol-3-phosphate acyltransferase (205 aa).

5 helical membrane passes run 13-33 (LLAL…GLIL), 68-88 (LLLD…LWGY), 90-110 (ASLV…WLGF), 120-140 (IGVL…IWLA), and 147-167 (YSSL…WVLG).

It belongs to the PlsY family. Probably interacts with PlsX.

Its subcellular location is the cell inner membrane. It catalyses the reaction an acyl phosphate + sn-glycerol 3-phosphate = a 1-acyl-sn-glycero-3-phosphate + phosphate. It participates in lipid metabolism; phospholipid metabolism. Functionally, catalyzes the transfer of an acyl group from acyl-phosphate (acyl-PO(4)) to glycerol-3-phosphate (G3P) to form lysophosphatidic acid (LPA). This enzyme utilizes acyl-phosphate as fatty acyl donor, but not acyl-CoA or acyl-ACP. The protein is Glycerol-3-phosphate acyltransferase of Agrobacterium fabrum (strain C58 / ATCC 33970) (Agrobacterium tumefaciens (strain C58)).